The following is a 51-amino-acid chain: Large ribosomal subunit protein eL39 (51 aa).

The protein belongs to the eukaryotic ribosomal protein eL39 family. In terms of assembly, part of the 50S ribosomal subunit.

The polypeptide is Large ribosomal subunit protein eL39 (Pyrococcus furiosus (strain ATCC 43587 / DSM 3638 / JCM 8422 / Vc1)).